Consider the following 447-residue polypeptide: Glutamate--tRNA ligase 2 (447 aa).

A 'HIGH' region motif is present at residues 9 to 19 (PSPTGYLHIGN). The 'KMSKS' region signature appears at 240–244 (GLSKR). K243 contributes to the ATP binding site.

It belongs to the class-I aminoacyl-tRNA synthetase family. Glutamate--tRNA ligase type 1 subfamily. As to quaternary structure, monomer.

The protein resides in the cytoplasm. The catalysed reaction is tRNA(Glu) + L-glutamate + ATP = L-glutamyl-tRNA(Glu) + AMP + diphosphate. Catalyzes the attachment of glutamate to tRNA(Glu) in a two-step reaction: glutamate is first activated by ATP to form Glu-AMP and then transferred to the acceptor end of tRNA(Glu). The sequence is that of Glutamate--tRNA ligase 2 from Methylobacterium sp. (strain 4-46).